The primary structure comprises 164 residues: Interferon gamma (164 aa).

Positions 1-19 (MTCQTYNLFVLSVIMIYYG) are cleaved as a signal peptide. N-linked (GlcNAc...) asparagine glycans are attached at residues Asn42 and Asn61.

Belongs to the type II (or gamma) interferon family. Homodimer.

The protein localises to the secreted. Functionally, produced by lymphocytes activated by specific antigens or mitogens. IFN-gamma, in addition to having antiviral activity, has important immunoregulatory functions. It is a potent activator of macrophages, it has antiproliferative effects on transformed cells and it can potentiate the antiviral and antitumor effects of the type I interferons. This Gallus gallus (Chicken) protein is Interferon gamma (IFNG).